Reading from the N-terminus, the 736-residue chain is RNA-binding protein RMD9-like, mitochondrial (736 aa).

Disordered stretches follow at residues 1-28 (MFRF…KTNS), 124-148 (PRRS…HPNT), and 566-618 (NRGI…GTPV). The transit peptide at 1–79 (MFRFAQPANV…HFKNQFSSRN (79 aa)) directs the protein to the mitochondrion. Residues 125–140 (RRSNMRNNGNNNMNNG) show a composition bias toward low complexity. The span at 566 to 578 (NRGISSSSPMSAV) shows a compositional bias: polar residues. Residues 579-596 (NSLAPSTTNTPSPSLSPI) are compositionally biased toward low complexity. Over residues 602–613 (LSSARNTPNKIW) the composition is skewed to polar residues.

The protein belongs to the RMD9 family. As to quaternary structure, monomer. In terms of processing, phosphorylated. Phosphorylation promotes binding to RNA.

It is found in the mitochondrion inner membrane. May be involved in the processing or stability of mitochondrial mRNAs. The protein is RNA-binding protein RMD9-like, mitochondrial of Candida glabrata (strain ATCC 2001 / BCRC 20586 / JCM 3761 / NBRC 0622 / NRRL Y-65 / CBS 138) (Yeast).